We begin with the raw amino-acid sequence, 457 residues long: Hydrogenobyrinate a,c-diamide synthase (457 aa).

The region spanning 255–441 is the GATase cobBQ-type domain; it reads TVAIAAGRAF…LHTHPAATPG (187 aa). Cys-337 acts as the Nucleophile in catalysis.

The protein belongs to the CobB/CbiA family. The cofactor is Mg(2+).

The enzyme catalyses hydrogenobyrinate + 2 L-glutamine + 2 ATP + 2 H2O = hydrogenobyrinate a,c-diamide + 2 L-glutamate + 2 ADP + 2 phosphate + 2 H(+). Its pathway is cofactor biosynthesis; adenosylcobalamin biosynthesis; cob(II)yrinate a,c-diamide from precorrin-2 (aerobic route): step 9/10. In terms of biological role, catalyzes the ATP-dependent amidation of the two carboxylate groups at positions a and c of hydrogenobyrinate, using either L-glutamine or ammonia as the nitrogen source. The polypeptide is Hydrogenobyrinate a,c-diamide synthase (Mycobacterium bovis (strain ATCC BAA-935 / AF2122/97)).